The following is a 186-amino-acid chain: Spermidine N(1)-acetyltransferase (186 aa).

The region spanning 7–167 (VKLRPLERED…NAIRMCIFQH (161 aa)) is the N-acetyltransferase domain. Spermine contacts are provided by residues M30, E35, E43, and 51–54 (HIHD). E35 lines the Mg(2+) pocket. Residues E35 and E43 each coordinate spermidine. E76 lines the Mg(2+) pocket. 85 to 87 (EFQ) is a binding site for spermine. Residues 88-90 (III), 95-101 (QGKGLAT), and 128-137 (NEKAIHIYRK) each bind acetyl-CoA. Y135 acts as the Proton donor in catalysis.

It belongs to the acetyltransferase family. In terms of assembly, homododecamer.

It is found in the cytoplasm. The catalysed reaction is an alkane-alpha,omega-diamine + acetyl-CoA = an N-acetylalkane-alpha,omega-diamine + CoA + H(+). The enzyme catalyses spermidine + acetyl-CoA = N(1)-acetylspermidine + CoA + H(+). It carries out the reaction spermidine + acetyl-CoA = N(8)-acetylspermidine + CoA + H(+). It catalyses the reaction spermine + acetyl-CoA = N(1)-acetylspermine + CoA + H(+). It functions in the pathway amine and polyamine degradation; spermidine degradation. The protein operates within amine and polyamine degradation; spermine degradation. In terms of biological role, involved in the protection against polyamine toxicity by regulating their concentration. Catalyzes the transfer of an acetyl group from acetyl coenzyme A (AcCoA) to the primary amino groups of spermidine to yield N(1)- and N(8)-acetylspermidine. It can also use spermine. In Escherichia coli O157:H7, this protein is Spermidine N(1)-acetyltransferase (speG).